Reading from the N-terminus, the 1338-residue chain is MDSFNNNNNNNNNNNNNNNNINGEGITLRTLLNSCTNTSSNEQLIVNNVNKNSNIINNININNTPSPISTCINVNKIELRGSSNGIFLNSKIKVPLPNSTLLEQQQDGADEQDKKQQSLSDKNILFSSGDKEFLNHGSNNIITDQNTLLYQLQQQQQKEKEKENDEIMNHDDIIGYNEENEDNFFNEGMDPILAHSIEHHLHNHHHHHGEFDTQENEDTSGESSDESENIDEVLVYTEDIESEKEKKRERLITSPPSFDPHTLYSMSQSLLNCSLNNNNNNNNSISSPSSSINNSGNNINLNNSGNNNVNSNNNTNIINNSNDNFISQPLFNPLSMPNNEQYELLPNPTTTTSTITSTTTTTTITNLPPALPSFPSSSSIKSLKNSFGSNSITSSGELNNVFSSSMSPPMSPPNRNVRSLTFPGTNPINCINTSVINSITANTNCINHHHHHHQHNHHNHHQGHNNINNSGHIRKSADDTVTLSPTLSSGSSSTSSSNPHHPNHNHQKGLNNKTLEKLSCTRKEIYELIEKKESLIEKQNLIDEGYSENADSFENLSEEIQKINEKIIELENLITSLSNSNSNWSLNGSSTSTISCNPLSPRSMNPSSSTSSTSSNLTNSLRKFSQELKIELRPLDLRAELYSSINTSPRGSASISGGSGSGGGGNNNGCFKTSSNSSINSPIQFFENENESIDSYEKKNEEQFESLTQLIRENQLYTKPIEFKEIKLLEKLESNSKSSNIWQIEYKSTQLVLKQPKDQDSDKNIEKRKQLFNGSNVSGSNNSGSSGGNNHNHHHCNNSNGSNSEVIPSKYTMIQHKNLGLLVGWCGDSIIFESFKGMNSLHDLIHRDGLKIDMALFIKISKDIASVMGLLHSKDVAHGNLTSRSIYLDRFQIVKVSFPKLNATDLNNPAIEPRYMAPEMTRMEEDQISCSIDVYAYAFVLWEALTSHLPFRKFNDISVAAKVAYENLRPKIPTSCPLIIRKLINRCWAPLPSDRPTFNDILKLFDHLEGKLFFSSPGILWSLNNDQEVERELQKKERFNEITEFLRGKKEIKFDEVAIVEKVGAGSFANVFLGIWNGYKVAIKILKNESISNDEKFIKEVSSLIKSHHPNVVTFMGACIDPPCIFTEYLQGGSLYDVLHIQKIKLNPLMMYKMIHDLSLGMEHLHSIQMLHRDLTSKNILLDEFKNIKIADFGLATTLSDDMTLSGITNPRWRSPELTKGLVYNEKVDVYSFGLVVYEIYTGKIPFEGLDGTASAAKAAFENYRPAIPPDCPVSLRKLITKCWASDPSQRPSFTEILTELETMKSKFIKQLSFLNDLIQNPDDDYNNNLNYDEEVDS.

Disordered stretches follow at residues 1–21 (MDSF…NNNI), 203–254 (NHHH…LITS), 282–316 (NNSI…NNTN), 449–515 (HHHH…NKTL), 595–618 (SCNP…SNLT), and 648–673 (SPRG…CFKT). Acidic residues predominate over residues 212-231 (DTQENEDTSGESSDESENID). Residues 449–463 (HHHHHQHNHHNHHQG) are compositionally biased toward basic residues. Residues 482–500 (TLSPTLSSGSSSTSSSNPH) show a composition bias toward low complexity. A compositionally biased stretch (gly residues) spans 657-667 (GGSGSGGGGNN). Protein kinase domains lie at 693-1014 (IDSY…KLFF) and 1057-1309 (VAIV…SKFI). ATP-binding positions include 699-707 (KNEEQFESL) and lysine 727. Residues 770-802 (QLFNGSNVSGSNNSGSSGGNNHNHHHCNNSNGS) are disordered. Over residues 773 to 790 (NGSNVSGSNNSGSSGGNN) the composition is skewed to low complexity. Residues 1063-1071 (VGAGSFANV) and lysine 1084 contribute to the ATP site. The active-site Proton acceptor is aspartate 1174.

Belongs to the protein kinase superfamily. TKL Tyr protein kinase family. Post-translationally, C-terminal tyrosine kinase domain is capable of autophosphorylation, in vitro.

It carries out the reaction L-seryl-[protein] + ATP = O-phospho-L-seryl-[protein] + ADP + H(+). The catalysed reaction is L-threonyl-[protein] + ATP = O-phospho-L-threonyl-[protein] + ADP + H(+). The enzyme catalyses L-tyrosyl-[protein] + ATP = O-phospho-L-tyrosyl-[protein] + ADP + H(+). Functionally, involved in the development. Negatively regulates tyrosine phosphorylation and activation state of dstC/STATc, probably by activating a dstC/STATc phosphatase. This is Dual specificity protein kinase pyk3 (pyk3) from Dictyostelium discoideum (Social amoeba).